We begin with the raw amino-acid sequence, 283 residues long: Thymidylate synthase (283 aa).

R22 is a dUMP binding site. C160 acts as the Nucleophile in catalysis. DUMP is bound by residues 180–183 (RSCD), N191, and 221–223 (HIY). D183 lines the (6R)-5,10-methylene-5,6,7,8-tetrahydrofolate pocket. Residue S282 participates in (6R)-5,10-methylene-5,6,7,8-tetrahydrofolate binding.

This sequence belongs to the thymidylate synthase family. Bacterial-type ThyA subfamily. In terms of assembly, homodimer.

The protein resides in the cytoplasm. The enzyme catalyses dUMP + (6R)-5,10-methylene-5,6,7,8-tetrahydrofolate = 7,8-dihydrofolate + dTMP. Its pathway is pyrimidine metabolism; dTTP biosynthesis. Functionally, catalyzes the reductive methylation of 2'-deoxyuridine-5'-monophosphate (dUMP) to 2'-deoxythymidine-5'-monophosphate (dTMP) while utilizing 5,10-methylenetetrahydrofolate (mTHF) as the methyl donor and reductant in the reaction, yielding dihydrofolate (DHF) as a by-product. This enzymatic reaction provides an intracellular de novo source of dTMP, an essential precursor for DNA biosynthesis. This chain is Thymidylate synthase, found in Vibrio vulnificus (strain CMCP6).